A 369-amino-acid chain; its full sequence is F-box protein UCC1 (369 aa).

The 38-residue stretch at 8 to 45 (LMDLPLEIHLSLLEYVPNELRAVNKYFYVLHNHSYKEK) folds into the F-box domain.

Component of the SCF(UCC1) E3 ubiquitin-protein ligase complex composed of CDC53, SKP1, RBX1 and UCC1. Interacts with CIT2. Post-translationally, monoubiquitinated by UBC4.

It participates in protein modification; protein ubiquitination. Substrate recognition component of the SKP1-CUL1-F-box protein E3 ubiquitin-protein ligase complex SCF(UCC1) which mediates the ubiquitination and subsequent proteasomal degradation of target proteins. The SCF(UCC1) complex acts as a metabolic switch for the glyoxylate cycle and regulates the level of CIT2 protein to maintain citrate homeostasis. The polypeptide is F-box protein UCC1 (UCC1) (Saccharomyces cerevisiae (strain ATCC 204508 / S288c) (Baker's yeast)).